Consider the following 950-residue polypeptide: Valine--tRNA ligase, mitochondrial (950 aa).

The transit peptide at 1 to 90 (MFHFQRSFSS…ITIQDALARF (90 aa)) directs the protein to the mitochondrion. Residues 67 to 77 (PNITGKLHIGH) carry the 'HIGH' region motif. Positions 556-560 (KMSKS) match the 'KMSKS' region motif. Lys559 is an ATP binding site.

The protein belongs to the class-I aminoacyl-tRNA synthetase family.

The protein localises to the mitochondrion. The enzyme catalyses tRNA(Val) + L-valine + ATP = L-valyl-tRNA(Val) + AMP + diphosphate. This is Valine--tRNA ligase, mitochondrial (vas1) from Schizosaccharomyces pombe (strain 972 / ATCC 24843) (Fission yeast).